We begin with the raw amino-acid sequence, 155 residues long: Transcription antitermination protein NusB (155 aa).

It belongs to the NusB family.

In terms of biological role, involved in transcription antitermination. Required for transcription of ribosomal RNA (rRNA) genes. Binds specifically to the boxA antiterminator sequence of the ribosomal RNA (rrn) operons. The chain is Transcription antitermination protein NusB from Ralstonia nicotianae (strain ATCC BAA-1114 / GMI1000) (Ralstonia solanacearum).